Consider the following 268-residue polypeptide: Small ribosomal subunit protein eS1 (268 aa).

The disordered stretch occupies residues 1–21; that stretch reads MAVGKNKGLSKGGKKGGKKKV.

Belongs to the eukaryotic ribosomal protein eS1 family. Component of the small ribosomal subunit. Mature ribosomes consist of a small (40S) and a large (60S) subunit. The 40S subunit contains about 33 different proteins and 1 molecule of RNA (18S). The 60S subunit contains about 49 different proteins and 3 molecules of RNA (28S, 5.8S and 5S).

It localises to the cytoplasm. Essential for oogenesis; required for late follicle cell development. The protein is Small ribosomal subunit protein eS1 of Drosophila willistoni (Fruit fly).